Reading from the N-terminus, the 445-residue chain is Exodeoxyribonuclease 7 large subunit (445 aa).

Belongs to the XseA family. As to quaternary structure, heterooligomer composed of large and small subunits.

Its subcellular location is the cytoplasm. It carries out the reaction Exonucleolytic cleavage in either 5'- to 3'- or 3'- to 5'-direction to yield nucleoside 5'-phosphates.. In terms of biological role, bidirectionally degrades single-stranded DNA into large acid-insoluble oligonucleotides, which are then degraded further into small acid-soluble oligonucleotides. This is Exodeoxyribonuclease 7 large subunit from Shewanella halifaxensis (strain HAW-EB4).